We begin with the raw amino-acid sequence, 318 residues long: Glutathione synthetase (318 aa).

An ATP-grasp domain is found at 128-313 (KLAILNFSRF…VAAMFADAVA (186 aa)). 154 to 210 (LKEHGDIIIKPLDGMGGMGIFRLTEKDPNIGSILETLMQLDSRTIMAQRYIPEIVHG) is an ATP binding site. Mg(2+) is bound by residues Glu284 and Asn286.

It belongs to the prokaryotic GSH synthase family. Mg(2+) is required as a cofactor. Mn(2+) serves as cofactor.

It catalyses the reaction gamma-L-glutamyl-L-cysteine + glycine + ATP = glutathione + ADP + phosphate + H(+). The protein operates within sulfur metabolism; glutathione biosynthesis; glutathione from L-cysteine and L-glutamate: step 2/2. This chain is Glutathione synthetase, found in Neisseria meningitidis serogroup A / serotype 4A (strain DSM 15465 / Z2491).